Consider the following 380-residue polypeptide: Protein COS12 (380 aa).

Over 1 to 70 (MDGAKFENTV…WKIRGKRHYL (70 aa)) the chain is Cytoplasmic. Residues 71–91 (VIVTALMFEVLYFLWTYSYIF) traverse the membrane as a helical segment. Over 92–231 (RERTLGKQVS…KLLWAFKEVT (140 aa)) the chain is Extracellular. A helical transmembrane segment spans residues 232–252 (IMNSRFAFFSIAYLNGLLTIP). Topologically, residues 253 to 257 (RLRNS) are cytoplasmic. The helical transmembrane segment at 258–278 (LHILYVCAVLSSMIIEYLIGI) threads the bilayer. At 279–380 (DKFRFKSMNL…KEAQSACNDV (102 aa)) the chain is on the extracellular side.

It belongs to the DUP/COS family.

Its subcellular location is the membrane. The sequence is that of Protein COS12 (COS12) from Saccharomyces cerevisiae (strain ATCC 204508 / S288c) (Baker's yeast).